The primary structure comprises 320 residues: Beta-carotene 4-ketolase 3 (320 aa).

It carries out the reaction echinenone + 2 AH2 + 2 O2 = canthaxanthin + 2 A + 3 H2O. The enzyme catalyses all-trans-beta-carotene + 2 AH2 + 2 O2 = echinenone + 2 A + 3 H2O. It functions in the pathway carotenoid biosynthesis. Involved in the biosynthesis of ketocarotenoids which are powerful anti-oxidative molecules. Catalyzes the conversion of beta-carotene to canthaxanthin via echinenone. The chain is Beta-carotene 4-ketolase 3 from Haematococcus lacustris (Green alga).